Reading from the N-terminus, the 238-residue chain is NADH-quinone oxidoreductase subunit C (238 aa).

Residues 1-11 show a composition bias toward polar residues; it reads MSTSNGSANGT. A disordered region spans residues 1–20; the sequence is MSTSNGSANGTNGVGLPRGD.

This sequence belongs to the complex I 30 kDa subunit family. As to quaternary structure, NDH-1 is composed of 14 different subunits. Subunits NuoB, C, D, E, F, and G constitute the peripheral sector of the complex.

It is found in the cell membrane. The enzyme catalyses a quinone + NADH + 5 H(+)(in) = a quinol + NAD(+) + 4 H(+)(out). Its function is as follows. NDH-1 shuttles electrons from NADH, via FMN and iron-sulfur (Fe-S) centers, to quinones in the respiratory chain. The immediate electron acceptor for the enzyme in this species is believed to be a menaquinone. Couples the redox reaction to proton translocation (for every two electrons transferred, four hydrogen ions are translocated across the cytoplasmic membrane), and thus conserves the redox energy in a proton gradient. This is NADH-quinone oxidoreductase subunit C from Mycolicibacterium smegmatis (strain ATCC 700084 / mc(2)155) (Mycobacterium smegmatis).